A 1350-amino-acid polypeptide reads, in one-letter code: Zinc finger protein Xfin (1350 aa).

In terms of domain architecture, KRAB spans 1–58 (MEEPKCLQREMYKSVMTENYQCVLSLGYPIRKPEIVSMMEVGEELWSKNDSARPGQKE). Residues 47–68 (SKNDSARPGQKEVEGETPKESD) form a disordered region. C2H2-type zinc fingers lie at residues 108-130 (HICS…QRMH), 136-158 (HHCP…QRTH), 164-186 (YQCV…QRTH), 192-214 (YTCL…RRTH), 220-242 (YRCS…LRTH), 248-270 (YECP…KRTH), 276-298 (FRCS…MRKH), 326-348 (YSCS…QQTH), 354-376 (YLCS…FRTH), 382-404 (YQCA…LRTH), 410-432 (FKCS…QRTH), 438-460 (YKCS…QRIH), 466-488 (YKCT…QKVH), 503-525 (HKCS…SKLH), 531-553 (FQCA…IRVH), 559-581 (FKCL…WRIH), 587-609 (FPCY…HRTH), 615-637 (HKCS…SRTH), 643-665 (YPCT…QRIH), 671-693 (YHCT…RRTH), 699-721 (YRCP…LVVH), 750-772 (YPCT…LRTH), 778-800 (YPCN…LRTH), 806-828 (YHCP…QRTH), 834-856 (YTCS…MRTH), 862-884 (YKCE…QRIH), 890-912 (YHCP…QRIH), 918-940 (YPCG…LKCH), 988-1010 (FKCN…VRIH), 1016-1038 (YKCS…YRTH), 1044-1066 (YKCG…QRVH), 1136-1158 (YSCS…WRMH), 1164-1186 (YTCK…VRIH), 1192-1214 (YPCS…QRIH), 1220-1242 (YTCT…SRTH), 1248-1270 (YKCN…MRTH), and 1276-1298 (YGCN…QRMC).

Belongs to the krueppel C2H2-type zinc-finger protein family. Post-translationally, phosphorylated. Phosphorylation enhances RNA binding. As to expression, expressed in oocytes, and in specialized cell types such as neural retina cones in adults.

It localises to the cytoplasm. Functionally, binds to poly-G sequences in RNA. May function in post-translational regulation processes. The sequence is that of Zinc finger protein Xfin from Xenopus laevis (African clawed frog).